A 354-amino-acid polypeptide reads, in one-letter code: MSERIRKIIHVDMDCFYAAVEMRDNPNYRDIALAVGGHEKQRGVISTCNYEARKFGVRSAMPTARALQLCPHLLVVPGRMHIYKQVSLQIRAIFERYTSLIEPLSLDEAYLDVTDATACRGSATLIAESIRNDIRNELGLTASAGIAPIKFLAKVASDMNKPNGQFVIPPEKVQEVVDKLPLEKIPGVGKVSLEKLHQAGFYLCEDIKNSDYRELLRQFGRQGASLWKRSHGIDDREVVVERERKSVGVERTFSQNISTYDECWQVIEEKLYPELEKRLERASPDKSIIKQGIKVKFADFQLTTIEHIHPQLELEDFKLLLKDILKRQNGREIRLLGLSVMLKPEEQARQLSFF.

Residues 8–189 form the UmuC domain; it reads IIHVDMDCFY…LPLEKIPGVG (182 aa). The Mg(2+) site is built by aspartate 12 and aspartate 107. The active site involves glutamate 108.

Belongs to the DNA polymerase type-Y family. As to quaternary structure, monomer. It depends on Mg(2+) as a cofactor.

Its subcellular location is the cytoplasm. It carries out the reaction DNA(n) + a 2'-deoxyribonucleoside 5'-triphosphate = DNA(n+1) + diphosphate. Functionally, poorly processive, error-prone DNA polymerase involved in untargeted mutagenesis. Copies undamaged DNA at stalled replication forks, which arise in vivo from mismatched or misaligned primer ends. These misaligned primers can be extended by PolIV. Exhibits no 3'-5' exonuclease (proofreading) activity. May be involved in translesional synthesis, in conjunction with the beta clamp from PolIII. The polypeptide is DNA polymerase IV (Vibrio parahaemolyticus serotype O3:K6 (strain RIMD 2210633)).